We begin with the raw amino-acid sequence, 112 residues long: 2Fe-2S ferredoxin (112 aa).

The 2Fe-2S ferredoxin-type domain occupies 5-107 (IKVTFIINDG…GIKVHLPAAT (103 aa)). [2Fe-2S] cluster contacts are provided by cysteine 42, cysteine 48, cysteine 51, and cysteine 88.

This sequence belongs to the adrenodoxin/putidaredoxin family. [2Fe-2S] cluster is required as a cofactor.

In terms of biological role, ferredoxin are iron-sulfur proteins that transfer electrons in a wide variety of metabolic reactions. This chain is 2Fe-2S ferredoxin (fdxB), found in Rickettsia rickettsii.